The sequence spans 268 residues: uncharacterized protein (268 aa).

The 63-residue stretch at 15-77 folds into the HTH iclR-type domain; it reads NQALIRGLRL…NAAGSYRLTI (63 aa). A DNA-binding region (H-T-H motif) is located at residues 37–56; sequence LAKLAELANLNKSTAHRLLQ. The region spanning 92–265 is the IclR-ED domain; sequence IIHVASPYLE…AEQISLELGY (174 aa).

This is an uncharacterized protein from Haemophilus influenzae (strain ATCC 51907 / DSM 11121 / KW20 / Rd).